Consider the following 421-residue polypeptide: Diaminobutyrate--2-oxoglutarate transaminase (421 aa).

At Lys-267 the chain carries N6-(pyridoxal phosphate)lysine.

It belongs to the class-III pyridoxal-phosphate-dependent aminotransferase family. As to quaternary structure, homohexamer. Requires pyridoxal 5'-phosphate as cofactor.

It catalyses the reaction L-2,4-diaminobutanoate + 2-oxoglutarate = L-aspartate 4-semialdehyde + L-glutamate. Its pathway is amine and polyamine biosynthesis; ectoine biosynthesis; L-ectoine from L-aspartate 4-semialdehyde: step 1/3. In terms of biological role, catalyzes reversively the conversion of L-aspartate beta-semialdehyde (ASA) to L-2,4-diaminobutyrate (DABA) by transamination with L-glutamate. Seems to use L-glutamate specifically as the amino group donor to ASA, as it is not active with L-alanine, L-glutamine, L-aspartate and L-lysine, and is only poorly active with L-homoserine. In the reverse reaction, gamma-aminobutyric acid (GABA) and L-ornithine can also be used as amino group donors to 2-oxoglutarate, but with a reduced activity compared to that with DABA. This Halomonas elongata (strain ATCC 33173 / DSM 2581 / NBRC 15536 / NCIMB 2198 / 1H9) protein is Diaminobutyrate--2-oxoglutarate transaminase (ectB).